Here is a 173-residue protein sequence, read N- to C-terminus: Crossover junction endodeoxyribonuclease RuvC (173 aa).

Active-site residues include D8, E67, and D139. Mg(2+) is bound by residues D8, E67, and D139.

This sequence belongs to the RuvC family. In terms of assembly, homodimer which binds Holliday junction (HJ) DNA. The HJ becomes 2-fold symmetrical on binding to RuvC with unstacked arms; it has a different conformation from HJ DNA in complex with RuvA. In the full resolvosome a probable DNA-RuvA(4)-RuvB(12)-RuvC(2) complex forms which resolves the HJ. Mg(2+) is required as a cofactor.

The protein resides in the cytoplasm. It catalyses the reaction Endonucleolytic cleavage at a junction such as a reciprocal single-stranded crossover between two homologous DNA duplexes (Holliday junction).. In terms of biological role, the RuvA-RuvB-RuvC complex processes Holliday junction (HJ) DNA during genetic recombination and DNA repair. Endonuclease that resolves HJ intermediates. Cleaves cruciform DNA by making single-stranded nicks across the HJ at symmetrical positions within the homologous arms, yielding a 5'-phosphate and a 3'-hydroxyl group; requires a central core of homology in the junction. The consensus cleavage sequence is 5'-(A/T)TT(C/G)-3'. Cleavage occurs on the 3'-side of the TT dinucleotide at the point of strand exchange. HJ branch migration catalyzed by RuvA-RuvB allows RuvC to scan DNA until it finds its consensus sequence, where it cleaves and resolves the cruciform DNA. This is Crossover junction endodeoxyribonuclease RuvC from Klebsiella pneumoniae (strain 342).